The chain runs to 441 residues: Cysteine--tRNA ligase (441 aa).

Cys24 serves as a coordination point for Zn(2+). The 'HIGH' region signature appears at 26–36 (PTVYNYIHIGN). 3 residues coordinate Zn(2+): Cys204, His230, and Glu234. The 'KMSKS' region motif lies at 262–266 (KMSKS). Residue Lys265 coordinates ATP.

Belongs to the class-I aminoacyl-tRNA synthetase family. In terms of assembly, monomer. Zn(2+) is required as a cofactor.

The protein localises to the cytoplasm. It carries out the reaction tRNA(Cys) + L-cysteine + ATP = L-cysteinyl-tRNA(Cys) + AMP + diphosphate. The sequence is that of Cysteine--tRNA ligase from Mycoplasma mycoides subsp. mycoides SC (strain CCUG 32753 / NCTC 10114 / PG1).